The chain runs to 252 residues: Lipoprotein PrgK (252 aa).

The first 17 residues, 1-17 (MIRRYLYTFLLVMTLAG), serve as a signal peptide directing secretion. The N-palmitoyl cysteine moiety is linked to residue Cys-18. Cys-18 is lipidated: S-diacylglycerol cysteine. The chain crosses the membrane as a helical span at residues 207-227 (FATSWIVLIILLSVMSAGFGV).

It belongs to the YscJ lipoprotein family.

It localises to the cell outer membrane. Its function is as follows. Required for invasion of epithelial cells. Could be involved in protein secretion. The polypeptide is Lipoprotein PrgK (prgK) (Salmonella typhimurium (strain LT2 / SGSC1412 / ATCC 700720)).